The chain runs to 157 residues: MNKVPMTLAGYESLKEELRWRQQEERPRIIEAIAEARAHGDLSENAEYHAAKEAQSLNEGRISELEDLIARAEVIDVTKLSGDTVKFGATVVLVDEDTEEEKTYQIVGDQEADVKSGRISISSPIARALIGKGVGDLIEVNAPGGARGYEVLRVQYG.

Belongs to the GreA/GreB family.

In terms of biological role, necessary for efficient RNA polymerase transcription elongation past template-encoded arresting sites. The arresting sites in DNA have the property of trapping a certain fraction of elongating RNA polymerases that pass through, resulting in locked ternary complexes. Cleavage of the nascent transcript by cleavage factors such as GreA or GreB allows the resumption of elongation from the new 3'terminus. GreA releases sequences of 2 to 3 nucleotides. The sequence is that of Transcription elongation factor GreA from Chelativorans sp. (strain BNC1).